We begin with the raw amino-acid sequence, 83 residues long: MKASMFLALAGLVLLFVVGYASESEEKEFPIELLSKIFAVDVFKGEERGCKGFGDSCTPGKNECCPNPACSNKHKWCKVYLGK.

A signal peptide spans M1–A21. Residues S22–R48 constitute a propeptide that is removed on maturation. Disulfide bonds link C50/C65, C57/C70, and C64/C77. L81 bears the Leucine amide mark.

This sequence belongs to the neurotoxin 10 (Hwtx-1) family. 15 (Hntx-3) subfamily. Monomer. As to expression, expressed by the venom gland.

The protein resides in the secreted. Functionally, lethal neurotoxin. Selectively blocks tetrodotoxin-sensitive voltage-gated sodium channels (Nav). Does not affect tetrodotoxin-resistant voltage-gated sodium channels or calcium channels. This is Mu-theraphotoxin-Hhn2m from Cyriopagopus hainanus (Chinese bird spider).